The sequence spans 520 residues: MDGVVVTYTKIAAAVAVAVVVVGWAWKVLNWVWVSPRKLEESLRKQGFRGNSYRLFYGDLKESSEMTRKAKLKPINLSDDPVLRVRPFIHQTVKKYGKSSFIWIGPTPRVQIMDPEIIKEIMVKSYKFNKPKRNPLVKLFADGLANHEGELWAKHRKLLNPAFHLERLKCMLPAMYFSCIEMVSKWDKMISKDGSRELDVWPFLQRLTSDVISHTAFGSSYEEGNIVFELQTEQAELVMKTLQSVYIPGWSYLPTKRNRKMKEIDRKTQSCLMNIINKKTKAMQAGEGSTDDILGILLESNLKEQLGQGKKNVGMSIQEVMGECKQFYFAGQETTSGLLVWTMVLLSIHPNWQARAREEVLQQFGNAKPDFDNLNHLKIVTMILYEVLRLYPPVDTLFRRVDQETTLGDITLPAGVQISLPIMILHHDQNIWGDDAKEFNPERFSEGVSKATKNQVVFFPFGWGPRICIGQNFALLEAKLALAIILQRFSFELSPSYTHAPTTVLTVQPQHGANLILHKL.

The chain crosses the membrane as a helical span at residues 14 to 34 (AVAVAVVVVGWAWKVLNWVWV). Cysteine 468 serves as a coordination point for heme.

Belongs to the cytochrome P450 family. It depends on heme as a cofactor.

The protein resides in the membrane. The catalysed reaction is oleanolate + reduced [NADPH--hemoprotein reductase] + O2 = hederagenin + oxidized [NADPH--hemoprotein reductase] + H2O + H(+). Its function is as follows. Catalyzes the oxidation of oleanolate at the C-23 position to form hederagenin. The chain is Cytochrome P450 72A397 from Kalopanax septemlobus (Castor aralia).